The following is an 862-amino-acid chain: Solute carrier family 4 member 11 (862 aa).

Topologically, residues 1–343 (MSQNEHCQDS…IIGKSKSVGK (343 aa)) are cytoplasmic. The helical transmembrane segment at 344–366 (YVTTTLFLYFACLLPTIAFGSLN) threads the bilayer. The Extracellular portion of the chain corresponds to 367 to 379 (DENTNGAIDVQKT). A helical membrane pass occupies residues 380 to 393 (IAGQSIGGLLYALF). Residues 394–398 (SGQPL) are Cytoplasmic-facing. Residues 399 to 415 (VILLTTAPLAIYTQVIR) traverse the membrane as a helical segment. The Extracellular segment spans residues 416–428 (VICDDYNLDFNAF). The helical transmembrane segment at 429 to 452 (YAWTGLWNSFFLALYAFLNLSLLM) threads the bilayer. At 453–460 (NLFKRSTE) the chain is on the cytoplasmic side. The chain crosses the membrane as a helical span at residues 461 to 481 (EIIALFISITFVLDAVKGMVK). Residues 482–542 (IFGKYYYGHH…SSPGSTHSGQ (61 aa)) lie on the Extracellular side of the membrane. Asn511 and Asn519 each carry an N-linked (GlcNAc...) asparagine glycan. Residues 543–564 (ATAVLSLLIMLGTLWLGYTLYQ) traverse the membrane as a helical segment. At 565–577 (FKKSPYLHPCVRE) the chain is on the cytoplasmic side. Residues 578-599 (TLSDCALPIAVLSFSLIGSYGF) form a helical membrane-spanning segment. The Extracellular portion of the chain corresponds to 600-627 (QEIEMSKFRYNPSESLFEVAQIHSLSFK). A helical transmembrane segment spans residues 628–645 (AIGSAMGLGFLLSLLFFI). At 646-670 (EQNLVAALVNAPENRLVKGTAYHWD) the chain is on the cytoplasmic side. The chain crosses the membrane as a helical span at residues 671–691 (LLLLAIINTGLSLFGLPWIHA). Residues 692-721 (AYPHSPLHVRALALVEERVENGHIYETIVD) are Extracellular-facing. A helical membrane pass occupies residues 722 to 746 (VKETRLTALGASVLVGLSLLLLPFP). Residues 747-752 (LQWIPK) are Cytoplasmic-facing. Residues 753–770 (PVLYGLFLYIALTSLDGN) traverse the membrane as a helical segment. Topologically, residues 771-774 (QLFS) are extracellular. Residues 775 to 797 (RVALLLKEQTSYPPTHYIRRVPQ) traverse the membrane as a helical segment. The Cytoplasmic segment spans residues 798–802 (RKIHY). A helical transmembrane segment spans residues 803–819 (FTGLQILQLLLLCAFGM). Residues 820-823 (SSLP) lie on the Extracellular side of the membrane. The chain crosses the membrane as a helical span at residues 824–844 (YMKMVFPLIMIAMIPIRYNLL). At 845 to 862 (PRIIEAKYLDVMDAEHRP) the chain is on the cytoplasmic side.

Belongs to the anion exchanger (TC 2.A.31) family. Homodimer. Post-translationally, glycosylated. In terms of tissue distribution, expressed in the endothelial cells of the cornea. In the inner ear, is located in fibrocytes underlying the stria vascularis. In the kidney, is expressed in the thin descending limb of Henle loop.

Its subcellular location is the cell membrane. The protein localises to the basolateral cell membrane. The enzyme catalyses tetrahydroxoborate(in) + 2 Na(+)(in) = tetrahydroxoborate(out) + 2 Na(+)(out). Functionally, multifunctional transporter with an impact in cell morphology and differentiation. In the presence of borate B(OH)4(-), acts as a voltage-dependent electrogenic Na(+)-coupled B(OH)4(-) cotransporter controlling boron homeostasis. At early stages of stem cell differentiation, participates in synergy with ITGA5-ITGB1 and ITGAV-ITGB3 integrins and BMPR1A to promote cell adhesion and contractility that drives differentiation toward osteogenic commitment while inhibiting adipogenesis. In the absence of B(OH)4(-), acts as a Na(+)-coupled OH(-) or H(+) permeable channel with implications in cellular redox balance. Regulates the oxidative stress response in corneal endothelium by enhancing antioxidant defenses and protecting cells from reactive oxygen species. In response to hypo-osmotic challenge, also acts as water permeable channel at the basolateral cell membrane of corneal endothelial cells and facilitates transendothelial fluid reabsorption in the aqueous humor. In the presence of ammonia, acts as an electrogenic NH3/H(+) cotransporter and may play a role in ammonia transport and reabsorption in renal Henle's loop epithelium. The chain is Solute carrier family 4 member 11 (Slc4a11) from Mus musculus (Mouse).